The primary structure comprises 332 residues: Abl interactor homolog (332 aa).

Residues 73 to 104 (HITSLLQLQTNEMEKLNIEIQTLTQRVRMIHD) adopt a coiled-coil conformation. The tract at residues 152–332 (SDINQNGVPP…NDFPPPPPPM (181 aa)) is disordered. The segment covering 164 to 206 (NHSNSSANLTSSSGHLAASSTSNSSTPSYQSPSYSSQPTISSG) has biased composition (low complexity). The segment covering 221–247 (APPPPSLSVPAAPPPPVMNVPPPPPTS) has biased composition (pro residues). A compositionally biased stretch (polar residues) spans 248–257 (QRPSSVNNNA). The span at 277 to 314 (LPPPPSFGLPPPPTLGDDFPPPPPPPVGSYDFPPPPAR) shows a compositional bias: pro residues.

Belongs to the ABI family. In terms of assembly, part of a Scar/WAVE complex containing brk1, scrA, abiA, pirA and napA. Interacts with scrA.

Involved in regulation of actin and microtubule organization. Required for proper cytokinesis. The sequence is that of Abl interactor homolog (abiA) from Dictyostelium discoideum (Social amoeba).